The sequence spans 319 residues: ATP-dependent 6-phosphofructokinase 1 (319 aa).

Gly-11 is a binding site for ATP. An ADP-binding site is contributed by 21-25 (RAVTR). ATP-binding positions include 72 to 73 (RC) and 102 to 105 (GDGS). Asp-103 contacts Mg(2+). 125–127 (TID) contacts substrate. Residue Asp-127 is the Proton acceptor of the active site. Arg-154 is a binding site for ADP. Residues Arg-162 and 169–171 (MGR) contribute to the substrate site. ADP contacts are provided by residues 185 to 187 (GAE) and 213 to 215 (KTH). Substrate is bound by residues Glu-222, Arg-243, and 249–252 (HIQR).

It belongs to the phosphofructokinase type A (PFKA) family. ATP-dependent PFK group I subfamily. Prokaryotic clade 'B1' sub-subfamily. In terms of assembly, homotetramer. It depends on Mg(2+) as a cofactor.

It is found in the cytoplasm. It carries out the reaction beta-D-fructose 6-phosphate + ATP = beta-D-fructose 1,6-bisphosphate + ADP + H(+). The protein operates within carbohydrate degradation; glycolysis; D-glyceraldehyde 3-phosphate and glycerone phosphate from D-glucose: step 3/4. Its activity is regulated as follows. Allosterically activated by ADP and other diphosphonucleosides, and allosterically inhibited by phosphoenolpyruvate. In terms of biological role, catalyzes the phosphorylation of D-fructose 6-phosphate to fructose 1,6-bisphosphate by ATP, the first committing step of glycolysis. The protein is ATP-dependent 6-phosphofructokinase 1 of Clostridium perfringens (strain 13 / Type A).